The chain runs to 250 residues: 5-oxoprolinase subunit A (250 aa).

The protein belongs to the LamB/PxpA family. Forms a complex composed of PxpA, PxpB and PxpC.

The enzyme catalyses 5-oxo-L-proline + ATP + 2 H2O = L-glutamate + ADP + phosphate + H(+). Catalyzes the cleavage of 5-oxoproline to form L-glutamate coupled to the hydrolysis of ATP to ADP and inorganic phosphate. The polypeptide is 5-oxoprolinase subunit A (Staphylococcus haemolyticus (strain JCSC1435)).